We begin with the raw amino-acid sequence, 636 residues long: ATP-dependent DNA helicase YoaA (636 aa).

Residues 10–272 (QLAKAIPGFK…KDTQQLQKCA (263 aa)) form the Helicase ATP-binding domain. ATP is bound at residue 45 to 52 (AGTGTGKT). [4Fe-4S] cluster contacts are provided by C108, C168, C173, and C179. The short motif at 225 to 228 (DEAH) is the DEAH box element.

The protein belongs to the helicase family. DinG subfamily. As to quaternary structure, interacts with the DNA polymerase III subunit Chi (holC), probably as a 1:1 complex. [4Fe-4S] cluster serves as cofactor. It depends on Mg(2+) as a cofactor.

The enzyme catalyses Couples ATP hydrolysis with the unwinding of duplex DNA at the replication fork by translocating in the 5'-3' direction. This creates two antiparallel DNA single strands (ssDNA). The leading ssDNA polymer is the template for DNA polymerase III holoenzyme which synthesizes a continuous strand.. It catalyses the reaction ATP + H2O = ADP + phosphate + H(+). Non-hydrolyzable ATP analogs ATP-gamma-S and adenylyl-imidodiphosphate (AMP-PNP) inhibit helicase activity. Functionally, DNA-dependent ATPase and 5'-3' DNA helicase. Has single-stranded (ss)DNA-dependent ATPase activity and 5'-3' helicase activity on forked DNA; both activities were measure in a YoaA:HolC (chi) complex. Requires a 20-35 nucleotide (nt) 5'-ssDNA tail; dsDNA with a 20 nt gap is also unwound. Unwinds damaged 3' nascent ends (such as those terminated by 3' azidothymidine (AZT), 3' dideoxy-C or an abasic site on the translocating strand), to promote repair and AZT excision. Without HolC the protein has much lower activity which could be due to YoaA instability or helicase stimulation by HolC. Genetically identified as involved in the repair of replication forks and tolerance of the chain-terminating nucleoside analog AZT. May act in proofreading during nucleotide misincorporation, it appears to aid in the removal of potential A-to-T transversion mutations in ndk mutants. In Escherichia coli (strain K12), this protein is ATP-dependent DNA helicase YoaA (yoaA).